The chain runs to 495 residues: REST corepressor 3 (495 aa).

Residues 1–83 (MRVGAEYQAR…KSLADLPNFT (83 aa)) form the ELM2 domain. Lys20 participates in a covalent cross-link: Glycyl lysine isopeptide (Lys-Gly) (interchain with G-Cter in SUMO2). In terms of domain architecture, SANT 1 spans 84–135 (PFPDEWTVEDKVLFEQAFSFHGKSFHRIQQMLPDKTIASLVKYYYSWKKTRS). The segment at 147–219 (LANRHNQGDS…SQRSKCRPPK (73 aa)) is disordered. Phosphoserine occurs at positions 156 and 171. Over residues 162-184 (ETHPMDGNDSDYDPKKEAKKEGN) the composition is skewed to basic and acidic residues. Lys193 participates in a covalent cross-link: Glycyl lysine isopeptide (Lys-Gly) (interchain with G-Cter in SUMO2). Over residues 205-217 (QHRHHSQRSKCRP) the composition is skewed to basic residues. Residues 237-273 (AANTILRQLDMELISLKRQVQNAKQVNSALKQKMEGG) adopt a coiled-coil conformation. A Glycyl lysine isopeptide (Lys-Gly) (interchain with G-Cter in SUMO2) cross-link involves residue Lys285. Residues 285-336 (KINARWTTEEQLLAVQGVRKYGKDFQAIADVIGNKTVGQVKNFFVNYRRRFN) form the SANT 2 domain. The disordered stretch occupies residues 346-495 (AEQGTQASNG…IQTDSQSSLH (150 aa)). Positions 348-357 (QGTQASNGDA) are enriched in polar residues. Residue Thr376 is modified to Phosphothreonine. Pro residues predominate over residues 393-405 (PSPPAPSSTPTPT). A compositionally biased stretch (low complexity) spans 419–428 (RPTLPAAPAL). Arg445 and Arg457 each carry asymmetric dimethylarginine. Residues 475–495 (VGGQQPPSLIGIQTDSQSSLH) are compositionally biased toward polar residues.

It belongs to the CoREST family.

The protein resides in the nucleus. In terms of biological role, may act as a component of a corepressor complex that represses transcription. This chain is REST corepressor 3 (RCOR3), found in Homo sapiens (Human).